The sequence spans 283 residues: Phosphatidylglycerol--prolipoprotein diacylglyceryl transferase (283 aa).

The next 4 membrane-spanning stretches (helical) occupy residues 20-40, 60-80, 94-114, and 121-141; these read IGGF…IIGL, LVIW…VAFE, IWQG…AILV, and LSFW…QAIG. An a 1,2-diacyl-sn-glycero-3-phospho-(1'-sn-glycerol)-binding site is contributed by arginine 142. The next 3 helical transmembrane spans lie at 183–203, 214–234, and 248–268; these read FLYE…LFFY, GTIT…IEGL, and QVVS…LYLL.

Belongs to the Lgt family.

The protein localises to the cell inner membrane. The catalysed reaction is L-cysteinyl-[prolipoprotein] + a 1,2-diacyl-sn-glycero-3-phospho-(1'-sn-glycerol) = an S-1,2-diacyl-sn-glyceryl-L-cysteinyl-[prolipoprotein] + sn-glycerol 1-phosphate + H(+). The protein operates within protein modification; lipoprotein biosynthesis (diacylglyceryl transfer). Functionally, catalyzes the transfer of the diacylglyceryl group from phosphatidylglycerol to the sulfhydryl group of the N-terminal cysteine of a prolipoprotein, the first step in the formation of mature lipoproteins. The chain is Phosphatidylglycerol--prolipoprotein diacylglyceryl transferase from Synechocystis sp. (strain ATCC 27184 / PCC 6803 / Kazusa).